A 489-amino-acid chain; its full sequence is Acetyl-coenzyme A carboxylase carboxyl transferase subunit beta, chloroplastic (489 aa).

The CoA carboxyltransferase N-terminal domain maps to 222 to 489 (LWVQCENCYG…FFPLNSNSIK (268 aa)). Residues C226, C229, C245, and C248 each contribute to the Zn(2+) site. The segment at 226-248 (CENCYGLNYKKFFRSKMNICEQC) adopts a C4-type zinc-finger fold.

It belongs to the AccD/PCCB family. As to quaternary structure, acetyl-CoA carboxylase is a heterohexamer composed of biotin carboxyl carrier protein, biotin carboxylase and 2 subunits each of ACCase subunit alpha and ACCase plastid-coded subunit beta (accD). It depends on Zn(2+) as a cofactor.

The protein localises to the plastid. The protein resides in the chloroplast stroma. It catalyses the reaction N(6)-carboxybiotinyl-L-lysyl-[protein] + acetyl-CoA = N(6)-biotinyl-L-lysyl-[protein] + malonyl-CoA. It functions in the pathway lipid metabolism; malonyl-CoA biosynthesis; malonyl-CoA from acetyl-CoA: step 1/1. Functionally, component of the acetyl coenzyme A carboxylase (ACC) complex. Biotin carboxylase (BC) catalyzes the carboxylation of biotin on its carrier protein (BCCP) and then the CO(2) group is transferred by the transcarboxylase to acetyl-CoA to form malonyl-CoA. This Buxus microphylla (Littleleaf boxwood) protein is Acetyl-coenzyme A carboxylase carboxyl transferase subunit beta, chloroplastic.